The chain runs to 89 residues: Elongation factor 1-beta (89 aa).

Belongs to the EF-1-beta/EF-1-delta family.

Promotes the exchange of GDP for GTP in EF-1-alpha/GDP, thus allowing the regeneration of EF-1-alpha/GTP that could then be used to form the ternary complex EF-1-alpha/GTP/AAtRNA. The sequence is that of Elongation factor 1-beta from Methanosarcina acetivorans (strain ATCC 35395 / DSM 2834 / JCM 12185 / C2A).